A 141-amino-acid polypeptide reads, in one-letter code: Large ribosomal subunit protein uL11 (141 aa).

Belongs to the universal ribosomal protein uL11 family. In terms of assembly, part of the ribosomal stalk of the 50S ribosomal subunit. Interacts with L10 and the large rRNA to form the base of the stalk. L10 forms an elongated spine to which L12 dimers bind in a sequential fashion forming a multimeric L10(L12)X complex. In terms of processing, one or more lysine residues are methylated.

Forms part of the ribosomal stalk which helps the ribosome interact with GTP-bound translation factors. This Alkaliphilus metalliredigens (strain QYMF) protein is Large ribosomal subunit protein uL11.